We begin with the raw amino-acid sequence, 298 residues long: Glyoxalase domain-containing protein 4 (298 aa).

A VOC 1 domain is found at 5–130 (RALHFVFKVG…GGYKFYLQDR (126 aa)). Position 109 is an N6-succinyllysine (lysine 109). Serine 131 carries the post-translational modification Phosphoserine. Positions 137–258 (PVLKVTLAVS…DGHEICFVGD (122 aa)) constitute a VOC 2 domain. The residue at position 273 (lysine 273) is an N6-succinyllysine.

It belongs to the glyoxalase I family. In terms of assembly, interacts with NUDT9.

The protein resides in the mitochondrion. This chain is Glyoxalase domain-containing protein 4 (Glod4), found in Rattus norvegicus (Rat).